A 140-amino-acid chain; its full sequence is Sex-regulated protein janus-B (140 aa).

Arg42 contacts substrate. The active-site Proton acceptor is the His69. Residue 110 to 112 (SRT) coordinates substrate.

This sequence belongs to the janus family.

JanA and janB regulate somatic sex differentiation. The polypeptide is Sex-regulated protein janus-B (janB) (Drosophila yakuba (Fruit fly)).